Consider the following 502-residue polypeptide: Cysteine--tRNA ligase (502 aa).

Cys30 is a binding site for Zn(2+). The 'HIGH' region motif lies at 32-42; sequence PTIYDYAHIGN. Cys224, His263, and Glu267 together coordinate Zn(2+). A 'KMSKS' region motif is present at residues 296-300; it reads KMSKS. Lys299 serves as a coordination point for ATP.

It belongs to the class-I aminoacyl-tRNA synthetase family. In terms of assembly, monomer. It depends on Zn(2+) as a cofactor.

The protein localises to the cytoplasm. The enzyme catalyses tRNA(Cys) + L-cysteine + ATP = L-cysteinyl-tRNA(Cys) + AMP + diphosphate. This chain is Cysteine--tRNA ligase, found in Bartonella quintana (strain Toulouse) (Rochalimaea quintana).